Consider the following 175-residue polypeptide: Mitochondrial inner membrane protease subunit 2 (175 aa).

A helical membrane pass occupies residues 19 to 37 (FFVAVPVAVTFLDRVACVA). Catalysis depends on residues serine 43 and lysine 91.

It belongs to the peptidase S26 family. IMP2 subfamily. In terms of assembly, heterodimer of 2 subunits, IMMPL1 and IMMPL2.

It is found in the mitochondrion inner membrane. Its function is as follows. Catalyzes the removal of transit peptides required for the targeting of proteins from the mitochondrial matrix, across the inner membrane, into the inter-membrane space. Known to process the nuclear encoded protein DIABLO. This Mus musculus (Mouse) protein is Mitochondrial inner membrane protease subunit 2 (Immp2l).